We begin with the raw amino-acid sequence, 78 residues long: Acyl carrier protein (78 aa).

A Carrier domain is found at 2–77 (SDTVERVKKI…DAVKFIDKAS (76 aa)). S37 bears the O-(pantetheine 4'-phosphoryl)serine mark.

The protein belongs to the acyl carrier protein (ACP) family. Post-translationally, 4'-phosphopantetheine is transferred from CoA to a specific serine of apo-ACP by AcpS. This modification is essential for activity because fatty acids are bound in thioester linkage to the sulfhydryl of the prosthetic group.

Its subcellular location is the cytoplasm. The protein operates within lipid metabolism; fatty acid biosynthesis. Carrier of the growing fatty acid chain in fatty acid biosynthesis. The polypeptide is Acyl carrier protein (Bartonella quintana (strain Toulouse) (Rochalimaea quintana)).